Reading from the N-terminus, the 567-residue chain is MSNISRQAYADMFGPTVGDKVRLADTELWIEVEDDLTTYGEEVKFGGGKVIRDGMGQGQMLAADCVDLVLTNALIVDHWGIVKADIGVKDGRIFAIGKAGNPDIQPNVTIPIGAATEVIAAEGKIVTAGGIDTHIHWICPQQAEEALVSGVTTMVGGGTGPAAGTHATTCTPGPWYISRMLQAADSLPVNIGLLGKGNVSQPDALREQVAAGVIGLKIHEDWGATPAAIDCALTVADEMDIQVALHSDTLNESGFVEDTLAAIGGRTIHTFHTEGAGGGHAPDIITACAHPNILPSSTNPTLPYTLNTIDEHLDMLMVCHHLDPDIAEDVAFAESRIRRETIAAEDVLHDLGAFSLTSSDSQAMGRVGEVILRTWQVAHRMKVQRGALAEETGDNDNFRVKRYIAKYTINPALTHGIAHEVGSIEVGKLADLVVWSPAFFGVKPATVIKGGMIAIAPMGDINASIPTPQPVHYRPMFGALGSARHHCRLTFLSQAAAANGVAERLNLRSAIAVVKGCRTVQKADMVHNSLQPNITVDAQTYEVRVDGELITSEPADVLPMAQRYFLF.

One can recognise a Urease domain in the interval 129-567 (GGIDTHIHWI…LPMAQRYFLF (439 aa)). His-134, His-136, and Lys-217 together coordinate Ni(2+). Lys-217 carries the N6-carboxylysine modification. Position 219 (His-219) interacts with substrate. Ni(2+) is bound by residues His-246 and His-272. The active-site Proton donor is the His-320. Ni(2+) is bound at residue Asp-360.

Belongs to the metallo-dependent hydrolases superfamily. Urease alpha subunit family. In terms of assembly, heterotrimer of UreA (gamma), UreB (beta) and UreC (alpha) subunits. Three heterotrimers associate to form the active enzyme. The apoenzyme interacts with an accessory complex composed of UreD, UreF and UreG, which is required for the assembly of the nickel containing metallocenter of UreC. The UreE protein may also play a direct role as a metallochaperone in nickel transfer to the urease apoprotein. Ni cation serves as cofactor. In terms of processing, carboxylation allows a single lysine to coordinate two nickel ions.

It is found in the cytoplasm. The catalysed reaction is urea + 2 H2O + H(+) = hydrogencarbonate + 2 NH4(+). It participates in nitrogen metabolism; urea degradation; CO(2) and NH(3) from urea (urease route): step 1/1. Its activity is regulated as follows. The apoenzyme can be activated in vitro in the presence of nickel ions and carbon dioxide, which promotes carboxylation of Lys-217. The sequence is that of Urease subunit alpha from Klebsiella aerogenes (Enterobacter aerogenes).